The sequence spans 83 residues: Normal mucosa of esophagus-specific gene 1 protein (83 aa).

The protein belongs to the complex I NDUFA4 subunit family. Expressed mainly in stomach, placenta, small intestine and colon, as well as in normal mucosa of esophagus. Down-regulated in esophageal squamous cell carcinoma.

It is found in the nucleus. The sequence is that of Normal mucosa of esophagus-specific gene 1 protein (NMES1) from Homo sapiens (Human).